The following is a 113-amino-acid chain: Neocarzinostatin (113 aa).

Intrachain disulfides connect Cys-37–Cys-47 and Cys-88–Cys-93.

This sequence belongs to the neocarzinostatin family.

Its function is as follows. NCS has antibiotic activity (for Gram-positive bacteria) and antitumor activity (for certain mouse tumors). NCS binds non-covalently to a chromophore which is the cytotoxic and mutagenic component of the antibiotic. The chromophore binds to DNA as a weak intercalator and causes single- and double-strand breaks. This chain is Neocarzinostatin (ncsA), found in Streptomyces malayensis.